The sequence spans 219 residues: UPF0126 membrane protein SCO5481 (219 aa).

6 helical membrane passes run Val10 to Ala30, Asn34 to Phe54, Ala66 to Leu86, Leu93 to Thr113, Gly120 to Leu140, and Leu158 to Ala178.

This sequence belongs to the UPF0126 family.

The protein resides in the cell membrane. In Streptomyces coelicolor (strain ATCC BAA-471 / A3(2) / M145), this protein is UPF0126 membrane protein SCO5481.